The sequence spans 431 residues: Glucose-1-phosphate adenylyltransferase (431 aa).

Lysine 39 contacts beta-D-fructose 1,6-bisphosphate. Arginine 40, histidine 46, and arginine 52 together coordinate AMP. Tyrosine 114 is an alpha-D-glucose 1-phosphate binding site. Arginine 130 provides a ligand contact to AMP. Residues glycine 179, 194–195 (EK), and serine 212 each bind alpha-D-glucose 1-phosphate. 2 residues coordinate AMP: glutamate 370 and arginine 386. Beta-D-fructose 1,6-bisphosphate is bound by residues 419-423 (REMLR) and 429-431 (QER).

Belongs to the bacterial/plant glucose-1-phosphate adenylyltransferase family. As to quaternary structure, homotetramer.

It catalyses the reaction alpha-D-glucose 1-phosphate + ATP + H(+) = ADP-alpha-D-glucose + diphosphate. Its pathway is glycan biosynthesis; glycogen biosynthesis. Allosterically activated by fructose-1,6-bisphosphate (F16BP) and inhibited by AMP. Functionally, involved in the biosynthesis of ADP-glucose, a building block required for the elongation reactions to produce glycogen. Catalyzes the reaction between ATP and alpha-D-glucose 1-phosphate (G1P) to produce pyrophosphate and ADP-Glc. The protein is Glucose-1-phosphate adenylyltransferase of Salmonella arizonae (strain ATCC BAA-731 / CDC346-86 / RSK2980).